A 227-amino-acid polypeptide reads, in one-letter code: 3,4-dihydroxy-2-butanone 4-phosphate synthase (227 aa).

Residues 45 to 46 (RE), Asp-50, 158 to 162 (RRGHT), and Glu-182 contribute to the D-ribulose 5-phosphate site. Residue Glu-46 coordinates Mg(2+). His-161 is a binding site for Mg(2+).

It belongs to the DHBP synthase family. In terms of assembly, homodimer. Mg(2+) serves as cofactor. The cofactor is Mn(2+).

It carries out the reaction D-ribulose 5-phosphate = (2S)-2-hydroxy-3-oxobutyl phosphate + formate + H(+). It functions in the pathway cofactor biosynthesis; riboflavin biosynthesis; 2-hydroxy-3-oxobutyl phosphate from D-ribulose 5-phosphate: step 1/1. Catalyzes the conversion of D-ribulose 5-phosphate to formate and 3,4-dihydroxy-2-butanone 4-phosphate. The protein is 3,4-dihydroxy-2-butanone 4-phosphate synthase of Ralstonia nicotianae (strain ATCC BAA-1114 / GMI1000) (Ralstonia solanacearum).